The sequence spans 441 residues: Glutamyl-tRNA reductase (441 aa).

Substrate contacts are provided by residues 58–61, Ser-116, 121–123, and Gln-127; these read TCNR and EPD. Cys-59 functions as the Nucleophile in the catalytic mechanism. 195 to 200 contacts NADP(+); the sequence is GAGMAG.

Belongs to the glutamyl-tRNA reductase family. As to quaternary structure, homodimer.

It carries out the reaction (S)-4-amino-5-oxopentanoate + tRNA(Glu) + NADP(+) = L-glutamyl-tRNA(Glu) + NADPH + H(+). It functions in the pathway porphyrin-containing compound metabolism; protoporphyrin-IX biosynthesis; 5-aminolevulinate from L-glutamyl-tRNA(Glu): step 1/2. Functionally, catalyzes the NADPH-dependent reduction of glutamyl-tRNA(Glu) to glutamate 1-semialdehyde (GSA). The polypeptide is Glutamyl-tRNA reductase (Ignicoccus hospitalis (strain KIN4/I / DSM 18386 / JCM 14125)).